The sequence spans 611 residues: Menin (611 aa).

The tract at residues 214-390 (GVAERSWLYL…SLLETGEERT (177 aa)) is interaction with FANCD2. Positions 460-553 (REAEAAEAEE…SPPPEGPVLT (94 aa)) are disordered. Over residues 484-500 (RRESKPEEPPPPKKPAL) the composition is skewed to basic and acidic residues. Serine 487 and serine 544 each carry phosphoserine. The residue at position 595 (threonine 595) is a Phosphothreonine.

As to quaternary structure, component of the MLL-HCF complex, at least composed of KMT2A/MLL1, MEN1, ASH2L, RBBP5, DPY30, WDR5, HCFC1 and HCFC2. Component of the menin-associated histone methyltransferase complex, at least composed of KMT2B/MLL4, MEN1, ASH2L, RBBP5, DPY30 and WDR5. Interacts with POLR2B. Interacts with POLR2A phosphorylated at 'Ser-5', but not with the unphosphorylated, nor 'Ser-2' phosphorylated POLR2A forms. Interacts with FANCD2 and DBF4. Interacts with SMAD3, but not with SMAD2, nor SMAD4. Directly interacts with NFKB1, NFKB2 and RELA. Interacts with JUND (via MBM motif); inhibits the interaction of JUND with MAPK10 and the phosphorylation of JUND by MAP kinases MAPK8 and MAPK10. Interacts with KMT2A (via MBM motif). The KMT2A-MEN1 complex interacts with PSIP1 with a greater affinity as MEN1 enhances interaction of KMT2A with PSIP1. As to expression, widely expressed, with high levels in hippocampus, cerebral cortex, testis and thymus (at protein level). Also expressed at high levels in pancreatic islets, ovary and bone marrow. In the brain, highest expression in hippocampus pyramidal nerve cells (at protein level). In the testis, may be expressed in spermatogonia (at protein level). Low expression, if any, in skeletal muscle.

It localises to the nucleus. In terms of biological role, essential component of a MLL/SET1 histone methyltransferase (HMT) complex, a complex that specifically methylates 'Lys-4' of histone H3 (H3K4). Functions as a transcriptional regulator. Binds to the TERT promoter and represses telomerase expression. Plays a role in TGFB1-mediated inhibition of cell-proliferation, possibly regulating SMAD3 transcriptional activity. Represses JUND-mediated transcriptional activation on AP1 sites, as well as that mediated by NFKB subunit RELA. Positively regulates HOXC8 and HOXC6 gene expression. May be involved in normal hematopoiesis through the activation of HOXA9 expression. May be involved in DNA repair. This is Menin (Men1) from Mus musculus (Mouse).